The primary structure comprises 892 residues: DNA mismatch repair protein MutS (892 aa).

Position 607-614 (607-614) interacts with ATP; sequence GPNMSGKS.

It belongs to the DNA mismatch repair MutS family.

Its function is as follows. This protein is involved in the repair of mismatches in DNA. It is possible that it carries out the mismatch recognition step. This protein has a weak ATPase activity. This is DNA mismatch repair protein MutS from Bacillus cereus (strain AH820).